The following is a 400-amino-acid chain: Nucleoside permease NupC (400 aa).

At 1-3 the chain is on the cytoplasmic side; it reads MDR. The chain crosses the membrane as a helical span at residues 4 to 24; it reads VLHFVLALAVVAILALLVSSD. The Periplasmic portion of the chain corresponds to 25 to 36; it reads RKKIRIRYVIQL. The chain crosses the membrane as a helical span at residues 37-57; that stretch reads LVIEVLLAWFFLNSDVGLGFV. The Cytoplasmic segment spans residues 58-86; that stretch reads KGFSEMFEKLLGFANEGTNFVFGSMNDQG. A helical transmembrane segment spans residues 87-107; that stretch reads LAFFFLKVLCPIVFISALIGI. At 108–168 the chain is on the periplasmic side; it reads LQHIRVLPVI…GKISRNRMYT (61 aa). A helical transmembrane segment spans residues 169 to 189; the sequence is MAATAMSTVSMSIVGAYMTML. The Cytoplasmic segment spans residues 190–192; it reads EPK. The chain crosses the membrane as a helical span at residues 193–213; the sequence is YVVAALVLNMFSTFIVLSLIN. The Periplasmic portion of the chain corresponds to 214 to 250; that stretch reads PYRVDASEENIQMSNLHEGQSFFEMLGEYILAGFKVA. The chain crosses the membrane as a helical span at residues 251-271; the sequence is IIVAAMLIGFIALIAALNALF. At 272-281 the chain is on the cytoplasmic side; sequence ATVTGWFGYS. A helical membrane pass occupies residues 282–302; the sequence is ISFQGILGYIFYPIAWVMGVP. Residues 303–341 are Periplasmic-facing; it reads SSEALQVGSIMATKLVSNEFVAMMDLQKIASTLSPRAEG. Residues 342 to 362 traverse the membrane as a helical segment; sequence IISVFLVSFANFSSIGIIAGA. The Cytoplasmic portion of the chain corresponds to 363–378; sequence VKGLNEEQGNVVSRFG. A helical membrane pass occupies residues 379 to 399; that stretch reads LKLVYGSTLVSVLSASIAALV. Position 400 (Leu400) is a topological domain, periplasmic.

This sequence belongs to the concentrative nucleoside transporter (CNT) (TC 2.A.41) family.

It is found in the cell inner membrane. It catalyses the reaction adenosine(in) + H(+)(in) = adenosine(out) + H(+)(out). It carries out the reaction uridine(in) + H(+)(in) = uridine(out) + H(+)(out). The catalysed reaction is thymidine(in) + H(+)(in) = thymidine(out) + H(+)(out). The enzyme catalyses cytidine(in) + H(+)(in) = cytidine(out) + H(+)(out). It catalyses the reaction 2'-deoxycytidine(in) + H(+)(in) = 2'-deoxycytidine(out) + H(+)(out). Transport is inhibited by the proton uncoupler dinitrophenol. Inhibited by the nucleoside antibiotic showdomycin. Functionally, nucleoside transport protein that can transport adenosine, uridine, thymidine, cytidine and deoxycytidine. Shows weak activity with inosine and xanthosine. Transport is driven by a proton motive force. Does not transport guanosine, deoxyguanosine, hypoxanthine or uracil. Also shows activity with the chemotherapeutic drugs 3'-azido-3'-deoxythymidine (AZT), 2',3'- dideoxycytidine (ddC) and 2'-deoxy-2',2'-difluorocytidine (gemcitabine). The polypeptide is Nucleoside permease NupC (Escherichia coli (strain K12)).